The following is a 584-amino-acid chain: DNA ligase (584 aa).

An ATP-binding site is contributed by Glu249. The active-site N6-AMP-lysine intermediate is the Lys251. 6 residues coordinate ATP: Arg256, Arg271, Glu301, Phe341, Arg416, and Lys422.

The protein belongs to the ATP-dependent DNA ligase family. It depends on Mg(2+) as a cofactor.

The enzyme catalyses ATP + (deoxyribonucleotide)n-3'-hydroxyl + 5'-phospho-(deoxyribonucleotide)m = (deoxyribonucleotide)n+m + AMP + diphosphate.. DNA ligase that seals nicks in double-stranded DNA during DNA replication, DNA recombination and DNA repair. The polypeptide is DNA ligase (Pyrobaculum islandicum (strain DSM 4184 / JCM 9189 / GEO3)).